Reading from the N-terminus, the 146-residue chain is Hemoglobin subunit beta-1 (146 aa).

The region spanning 2 to 146 (HWTEKERTII…VVSALGKQYH (145 aa)) is the Globin domain. Heme b is bound by residues His-63 and His-92.

Belongs to the globin family. As to quaternary structure, hb1 is a heterotetramer of two alpha chains and two beta-1 chains. In terms of tissue distribution, red blood cells.

In terms of biological role, involved in oxygen transport from gills to the various peripheral tissues. In Dissostichus eleginoides (Patagonian toothfish), this protein is Hemoglobin subunit beta-1.